Reading from the N-terminus, the 97-residue chain is Acylphosphatase (97 aa).

One can recognise an Acylphosphatase-like domain in the interval 7 to 97 (RLTAWVHGHV…QERFEGFVER (91 aa)). Active-site residues include R22 and N40.

It belongs to the acylphosphatase family.

It carries out the reaction an acyl phosphate + H2O = a carboxylate + phosphate + H(+). The protein is Acylphosphatase (acyP) of Mycobacterium avium (strain 104).